Reading from the N-terminus, the 176-residue chain is Peptide deformylase (176 aa).

The Fe cation site is built by cysteine 94 and histidine 136. Glutamate 137 is an active-site residue. A Fe cation-binding site is contributed by histidine 140.

Belongs to the polypeptide deformylase family. It depends on Fe(2+) as a cofactor.

It catalyses the reaction N-terminal N-formyl-L-methionyl-[peptide] + H2O = N-terminal L-methionyl-[peptide] + formate. In terms of biological role, removes the formyl group from the N-terminal Met of newly synthesized proteins. Requires at least a dipeptide for an efficient rate of reaction. N-terminal L-methionine is a prerequisite for activity but the enzyme has broad specificity at other positions. In Mesorhizobium japonicum (strain LMG 29417 / CECT 9101 / MAFF 303099) (Mesorhizobium loti (strain MAFF 303099)), this protein is Peptide deformylase.